The primary structure comprises 84 residues: Small ribosomal subunit protein bS20 (84 aa).

Belongs to the bacterial ribosomal protein bS20 family.

In terms of biological role, binds directly to 16S ribosomal RNA. This chain is Small ribosomal subunit protein bS20, found in Phocaeicola vulgatus (strain ATCC 8482 / DSM 1447 / JCM 5826 / CCUG 4940 / NBRC 14291 / NCTC 11154) (Bacteroides vulgatus).